The sequence spans 648 residues: Serine/threonine-protein phosphatase 1 regulatory subunit PIG1 (648 aa).

Residues 20 to 51 show a composition bias toward low complexity; it reads STSSFVSSTTSNSFSPLEDSTSASSSTSSSSS. The tract at residues 20 to 52 is disordered; that stretch reads STSSFVSSTTSNSFSPLEDSTSASSSTSSSSSG. Residues 201–331 form the CBM21 domain; sequence HSLELSDPVS…NNDYKNYEIT (131 aa). The span at 593-609 shows a compositional bias: polar residues; the sequence is RESSSPEISPLNTTTSL. Positions 593–629 are disordered; the sequence is RESSSPEISPLNTTTSLPFFPGDNMSDSSGEYEERTS.

In terms of biological role, regulates the activity of glycogen synthase. It is most probably a regulatory subunit for protein phosphatase type 1. The chain is Serine/threonine-protein phosphatase 1 regulatory subunit PIG1 (PIG1) from Saccharomyces cerevisiae (strain ATCC 204508 / S288c) (Baker's yeast).